Reading from the N-terminus, the 148-residue chain is FAD synthase (148 aa).

ATP-binding positions include 11–12 (TF), 16–19 (HPGH), Asn94, and Tyr121.

Belongs to the archaeal FAD synthase family. As to quaternary structure, homodimer. Requires a divalent metal cation as cofactor.

The catalysed reaction is FMN + ATP + H(+) = FAD + diphosphate. The protein operates within cofactor biosynthesis; FAD biosynthesis; FAD from FMN: step 1/1. Its function is as follows. Catalyzes the transfer of the AMP portion of ATP to flavin mononucleotide (FMN) to produce flavin adenine dinucleotide (FAD) coenzyme. The sequence is that of FAD synthase from Methanoregula boonei (strain DSM 21154 / JCM 14090 / 6A8).